A 260-amino-acid chain; its full sequence is Thiazole synthase (260 aa).

Lysine 102 acts as the Schiff-base intermediate with DXP in catalysis. Residues glycine 163, 189–190, and 211–212 each bind 1-deoxy-D-xylulose 5-phosphate; these read AG and NT.

Belongs to the ThiG family. As to quaternary structure, homotetramer. Forms heterodimers with either ThiH or ThiS.

It is found in the cytoplasm. The catalysed reaction is [ThiS sulfur-carrier protein]-C-terminal-Gly-aminoethanethioate + 2-iminoacetate + 1-deoxy-D-xylulose 5-phosphate = [ThiS sulfur-carrier protein]-C-terminal Gly-Gly + 2-[(2R,5Z)-2-carboxy-4-methylthiazol-5(2H)-ylidene]ethyl phosphate + 2 H2O + H(+). It functions in the pathway cofactor biosynthesis; thiamine diphosphate biosynthesis. In terms of biological role, catalyzes the rearrangement of 1-deoxy-D-xylulose 5-phosphate (DXP) to produce the thiazole phosphate moiety of thiamine. Sulfur is provided by the thiocarboxylate moiety of the carrier protein ThiS. In vitro, sulfur can be provided by H(2)S. In Geobacter metallireducens (strain ATCC 53774 / DSM 7210 / GS-15), this protein is Thiazole synthase.